Here is a 376-residue protein sequence, read N- to C-terminus: MADQLTPSLDIPAALKPRDGRFGSGPSKVRPEQLQALTNTAATLFGTSHRQAPVKNLVGRVRAGLAELFSLPDGYQVILGNGGATAFWDAAAFGLIDKRSLHLTYGEFSSKFASAVAKNPFIDEPIVIKSDPGSAPKPTGDPSVDVIAWAHNETSTGVAVPVRRPTGSGGALIAIDATSGAGGLPVDIAQTDAYYFAPQKNFASDGGLWLAIMSPAALARVDSITASGRWVPDFLSLPIAVENSLKNQTYNTPAICTLALLAEQLDWLLGNGGLEWAVKRTADSSQRLYAWAEDRPYTTPFVVDPALRSQVVGTIDFTDDVDAAAVAKILRANGIIDTEPYRKLGRNQLRVAMFPAVEPDDVRALTECVDWIVERL.

Residues 1–30 (MADQLTPSLDIPAALKPRDGRFGSGPSKVR) form a disordered region. Arg50 lines the L-glutamate pocket. Residues 84-85 (AT), Phe108, Thr154, Asp176, and Gln199 contribute to the pyridoxal 5'-phosphate site. The residue at position 200 (Lys200) is an N6-(pyridoxal phosphate)lysine. Residue 251-252 (NT) participates in pyridoxal 5'-phosphate binding.

Belongs to the class-V pyridoxal-phosphate-dependent aminotransferase family. SerC subfamily. As to quaternary structure, homodimer. Requires pyridoxal 5'-phosphate as cofactor.

The protein resides in the cytoplasm. The enzyme catalyses O-phospho-L-serine + 2-oxoglutarate = 3-phosphooxypyruvate + L-glutamate. The catalysed reaction is 4-(phosphooxy)-L-threonine + 2-oxoglutarate = (R)-3-hydroxy-2-oxo-4-phosphooxybutanoate + L-glutamate. Its pathway is amino-acid biosynthesis; L-serine biosynthesis; L-serine from 3-phospho-D-glycerate: step 2/3. The protein operates within cofactor biosynthesis; pyridoxine 5'-phosphate biosynthesis; pyridoxine 5'-phosphate from D-erythrose 4-phosphate: step 3/5. In terms of biological role, catalyzes the reversible conversion of 3-phosphohydroxypyruvate to phosphoserine and of 3-hydroxy-2-oxo-4-phosphonooxybutanoate to phosphohydroxythreonine. In Mycobacterium leprae (strain TN), this protein is Putative phosphoserine aminotransferase.